The sequence spans 313 residues: HPr kinase/phosphorylase (313 aa).

Active-site residues include histidine 136 and lysine 157. Residue 151–158 (GDSGIGKS) coordinates ATP. Serine 158 contacts Mg(2+). Aspartate 175 serves as the catalytic Proton acceptor; for phosphorylation activity. Proton donor; for dephosphorylation activity. Positions 199–208 (LEIRGLGIIN) are important for the catalytic mechanism of both phosphorylation and dephosphorylation. Glutamate 200 is a binding site for Mg(2+). Arginine 241 is a catalytic residue. Positions 262–267 (PVRPGR) are important for the catalytic mechanism of dephosphorylation.

The protein belongs to the HPrK/P family. As to quaternary structure, homohexamer. It depends on Mg(2+) as a cofactor.

It catalyses the reaction [HPr protein]-L-serine + ATP = [HPr protein]-O-phospho-L-serine + ADP + H(+). The catalysed reaction is [HPr protein]-O-phospho-L-serine + phosphate + H(+) = [HPr protein]-L-serine + diphosphate. Functionally, catalyzes the ATP- as well as the pyrophosphate-dependent phosphorylation of a specific serine residue in HPr, a phosphocarrier protein of the phosphoenolpyruvate-dependent sugar phosphotransferase system (PTS). HprK/P also catalyzes the pyrophosphate-producing, inorganic phosphate-dependent dephosphorylation (phosphorolysis) of seryl-phosphorylated HPr (P-Ser-HPr). The two antagonistic activities of HprK/P are regulated by several intracellular metabolites, which change their concentration in response to the absence or presence of rapidly metabolisable carbon sources (glucose, fructose, etc.) in the growth medium. Therefore, by controlling the phosphorylation state of HPr, HPrK/P is a sensor enzyme that plays a major role in the regulation of carbon metabolism and sugar transport: it mediates carbon catabolite repression (CCR), and regulates PTS-catalyzed carbohydrate uptake and inducer exclusion. The chain is HPr kinase/phosphorylase from Staphylococcus saprophyticus subsp. saprophyticus (strain ATCC 15305 / DSM 20229 / NCIMB 8711 / NCTC 7292 / S-41).